The chain runs to 575 residues: 2-isopropylmalate synthase (575 aa).

Residues 40–314 (PRWCAVDLRD…DPQIDFSDID (275 aa)) form the Pyruvate carboxyltransferase domain. Positions 49, 253, 255, and 289 each coordinate Mg(2+). A regulatory domain region spans residues 456–575 (SGSGTPEWGR…IVSAVNRALR (120 aa)).

It belongs to the alpha-IPM synthase/homocitrate synthase family. LeuA type 2 subfamily. As to quaternary structure, homodimer. Mg(2+) is required as a cofactor.

It localises to the cytoplasm. It catalyses the reaction 3-methyl-2-oxobutanoate + acetyl-CoA + H2O = (2S)-2-isopropylmalate + CoA + H(+). The protein operates within amino-acid biosynthesis; L-leucine biosynthesis; L-leucine from 3-methyl-2-oxobutanoate: step 1/4. Catalyzes the condensation of the acetyl group of acetyl-CoA with 3-methyl-2-oxobutanoate (2-ketoisovalerate) to form 3-carboxy-3-hydroxy-4-methylpentanoate (2-isopropylmalate). This is 2-isopropylmalate synthase from Kineococcus radiotolerans (strain ATCC BAA-149 / DSM 14245 / SRS30216).